We begin with the raw amino-acid sequence, 706 residues long: G2/M phase-specific E3 ubiquitin-protein ligase (706 aa).

The C2HC pre-PHD-type zinc finger occupies 11–51; it reads NLACVFCRKNDDCPNKYGEKKTKEKWNLTVHYYCLLMSSGI. The PHD-type 1 zinc finger occupies 79–128; the sequence is LKCCVCKKNGASIGCVAPRCKRSYHFPCGLQRECIFQFTGNFASFCWNHR. A PHD-type 2; degenerate zinc finger spans residues 143-193; sequence PCTICLEFIEPIPSYNILRSPCCKNAWFHRDCLQVQAINAGVFFFRCTICS. The segment at 237–286 adopts a PHD-type 3 zinc-finger fold; that stretch reads RCRCKEGRDYNAPDSKWEIKRCQCCGSSGTHLACSSLRSWEQNWECLECR. An HECT domain is found at 371–698; the sequence is IWTSALDAFR…IRNTLKLEKE (328 aa).

The protein resides in the nucleus. It is found in the nucleolus. It localises to the cytoplasm. The catalysed reaction is S-ubiquitinyl-[E2 ubiquitin-conjugating enzyme]-L-cysteine + [acceptor protein]-L-lysine = [E2 ubiquitin-conjugating enzyme]-L-cysteine + N(6)-ubiquitinyl-[acceptor protein]-L-lysine.. Its pathway is protein modification; protein ubiquitination. In terms of biological role, E3 ubiquitin-protein ligase which accepts ubiquitin from an E2 ubiquitin-conjugating enzyme in the form of a thioester and then directly transfers the ubiquitin to targeted substrates. Essential in early embryonic development to prevent apoptotic death. This Macaca fascicularis (Crab-eating macaque) protein is G2/M phase-specific E3 ubiquitin-protein ligase (G2E3).